Reading from the N-terminus, the 108-residue chain is Cytochrome c (108 aa).

Heme c is bound by residues cysteine 19, cysteine 22, histidine 23, and methionine 85.

The protein belongs to the cytochrome c family. In terms of processing, binds 1 heme c group covalently per subunit.

Its subcellular location is the mitochondrion intermembrane space. In terms of biological role, electron carrier protein. The oxidized form of the cytochrome c heme group can accept an electron from the heme group of the cytochrome c1 subunit of cytochrome reductase. Cytochrome c then transfers this electron to the cytochrome oxidase complex, the final protein carrier in the mitochondrial electron-transport chain. This is Cytochrome c from Stellaria longipes (Longstalk starwort).